The primary structure comprises 179 residues: MNEMLKEELLQSIREVKDYPKKGILFKDITTLLNYPKLFNKLIDALKKRYLALNIDFIVGIEARGFILGSAFAYALGVGFVPVRKKGKLPAHTLSQSYSLEYGSDSIEIHSDAFRGIKGVRVVLVDDLLATGGTALASLELIKALQAECIEACFLIGLKELPGIQLLEEHVKTFCLLEC.

This sequence belongs to the purine/pyrimidine phosphoribosyltransferase family. Homodimer.

The protein resides in the cytoplasm. The catalysed reaction is AMP + diphosphate = 5-phospho-alpha-D-ribose 1-diphosphate + adenine. It participates in purine metabolism; AMP biosynthesis via salvage pathway; AMP from adenine: step 1/1. Its function is as follows. Catalyzes a salvage reaction resulting in the formation of AMP, that is energically less costly than de novo synthesis. This Helicobacter pylori (strain J99 / ATCC 700824) (Campylobacter pylori J99) protein is Adenine phosphoribosyltransferase.